The sequence spans 435 residues: MNRRRRYTGSNPSLRRVLYRAHLGVALVAVFTAGLAVTLVGLLTLRAYADPNQQLIARSISYTVEAAVVFGDAQAAEESLALIASSEEVSSAIVYDRQGQPLASWHRESTGPLHLLEQQLAHWLLSAPTEQPILHDGQKIGSVEVKGSGGSLLRFLLTGFAGMVLCLLLTALGAFYLSRRLVRGIVGPLDQLAKVAHTVRRERDFEKRVPEAGIAELSQLGEDFNALLDELESWQARLQDENASLAHQAHHDSLTSLPNRAFFEGRLSRALRDASEHREQLAVLFIDSDRFKEINDRLGHAAGDTVLVNIAMRIRGQLRESDLVARLGGDEFAVLLAPLASGADALRIADNIIASMQAPIRLSDGSTVSTSLTIGIALYPEHADTPAALLHDADMAMYIAKRQARGSRRLAELNDPRILQEEKEIDSATPEAPPK.

Over 1-22 (MNRRRRYTGSNPSLRRVLYRAH) the chain is Cytoplasmic. Residues 23–43 (LGVALVAVFTAGLAVTLVGLL) traverse the membrane as a helical segment. At 44-154 (TLRAYADPNQ…VKGSGGSLLR (111 aa)) the chain is on the periplasmic side. The helical transmembrane segment at 155–175 (FLLTGFAGMVLCLLLTALGAF) threads the bilayer. At 176-435 (YLSRRLVRGI…DSATPEAPPK (260 aa)) the chain is on the cytoplasmic side. Positions 183–236 (RGIVGPLDQLAKVAHTVRRERDFEKRVPEAGIAELSQLGEDFNALLDELESWQA) constitute an HAMP domain. One can recognise a GGDEF domain in the interval 279-415 (EQLAVLFIDS…GSRRLAELND (137 aa)). Residues Ser-288 and Asp-330 each contribute to the Mg(2+) site. The Proton acceptor role is filled by Asp-330. Over residues 414–426 (NDPRILQEEKEID) the composition is skewed to basic and acidic residues. Residues 414 to 435 (NDPRILQEEKEIDSATPEAPPK) form a disordered region.

Mg(2+) serves as cofactor. Post-translationally, phosphorylated at both Tyr residues and Ser/Thr residues. Dephosphorylated and inactivated by TpbA.

It localises to the cell inner membrane. The catalysed reaction is 2 GTP = 3',3'-c-di-GMP + 2 diphosphate. It participates in purine metabolism; 3',5'-cyclic di-GMP biosynthesis. With respect to regulation, activity is tightly controlled by YfiR, a small periplasmic protein, and the OmpA/Pal-like outer-membrane lipoprotein YfiB. Diguanylate cyclase activity is inhibited by the specific interaction of YfiR with the TpbB periplasmic domain and is activated by YfiB, which releases the YfiR-mediated repression through sequestration of YfiR to the outer membrane. Activity is also controlled by dephosphorylation of the periplasmic domain by the tyrosine phosphatase TpbA. Its function is as follows. Catalyzes the synthesis of cyclic-di-GMP (c-di-GMP) via the condensation of 2 GTP molecules. Important for the regulation of biofilm maintenance when exposed to peroxide. Functionally, part of the YfiB-TpbB-YfiR (or yfiBNR) system, encoding a tripartite signaling module that modulates intracellular c-di-GMP levels. The system is a key regulator of the small colony variant (SCV) phenotype, and plays an important role in biofilm formation and in vivo persistence. The c-di-GMP produced by TpbB/YfiN stimulates the production of the Pel and Psl exopolysaccharides, which promotes surface attachment, generates an SCV phenotype and confers resistance against phagocytosis. The chain is Diguanylate cyclase TpbB from Pseudomonas aeruginosa (strain UCBPP-PA14).